The following is a 502-amino-acid chain: MEKEDQEKTGKLTLVLALATFLAAFGSSFQYGYNVAAVNSPSEFMQQFYNDTYYDRNKENIESFTLTLLWSLTVSMFPFGGFIGSLMVGFLVNNLGRKGALLFNNIFSILPAILMGCSKIAKSFEIIIASRLLVGICAGISSNVVPMYLGELAPKNLRGALGVVPQLFITVGILVAQLFGLRSVLASEEGWPILLGLTGVPAGLQLLLLPFFPESPRYLLIQKKNESAAEKALQTLRGWKDVDMEMEEIRKEDEAEKAAGFISVWKLFRMQSLRWQLISTIVLMAGQQLSGVNAIYYYADQIYLSAGVKSNDVQYVTAGTGAVNVFMTMVTVFVVELWGRRNLLLIGFSTCLTACIVLTVALALQNTISWMPYVSIVCVIVYVIGHAVGPSPIPALFITEIFLQSSRPSAYMIGGSVHWLSNFIVGLIFPFIQVGLGPYSFIIFAIICLLTTIYIFMVVPETKGRTFVEINQIFAKKNKVSDVYPEKEEKELNDLPPATREQ.

M1 is modified (N-acetylmethionine). The Cytoplasmic portion of the chain corresponds to 1 to 17 (MEKEDQEKTGKLTLVLA). A helical membrane pass occupies residues 18-38 (LATFLAAFGSSFQYGYNVAAV). Y31 contacts D-fructose. Over 39–67 (NSPSEFMQQFYNDTYYDRNKENIESFTLT) the chain is Extracellular. Residue N50 is glycosylated (N-linked (GlcNAc...) asparagine). The helical transmembrane segment at 68–90 (LLWSLTVSMFPFGGFIGSLMVGF) threads the bilayer. The Cytoplasmic segment spans residues 91–97 (LVNNLGR). The helical transmembrane segment at 98-118 (KGALLFNNIFSILPAILMGCS) threads the bilayer. Residues 119–125 (KIAKSFE) lie on the Extracellular side of the membrane. A helical membrane pass occupies residues 126–148 (IIIASRLLVGICAGISSNVVPMY). Residues 149–160 (LGELAPKNLRGA) lie on the Cytoplasmic side of the membrane. Residues 161 to 181 (LGVVPQLFITVGILVAQLFGL) traverse the membrane as a helical segment. Q166 provides a ligand contact to D-fructose. Topologically, residues 182–191 (RSVLASEEGW) are extracellular. The helical transmembrane segment at 192–212 (PILLGLTGVPAGLQLLLLPFF) threads the bilayer. Topologically, residues 213–276 (PESPRYLLIQ…LFRMQSLRWQ (64 aa)) are cytoplasmic. A helical transmembrane segment spans residues 277-297 (LISTIVLMAGQQLSGVNAIYY). D-fructose is bound by residues Q287 and 295 to 297 (IYY). At 298–312 (YADQIYLSAGVKSND) the chain is on the extracellular side. Residues 313–333 (VQYVTAGTGAVNVFMTMVTVF) form a helical membrane-spanning segment. The Cytoplasmic segment spans residues 334 to 341 (VVELWGRR). The chain crosses the membrane as a helical span at residues 342 to 362 (NLLLIGFSTCLTACIVLTVAL). The Extracellular portion of the chain corresponds to 363–370 (ALQNTISW). A helical membrane pass occupies residues 371–393 (MPYVSIVCVIVYVIGHAVGPSPI). H386 lines the D-fructose pocket. Residues 394 to 411 (PALFITEIFLQSSRPSAY) lie on the Cytoplasmic side of the membrane. The helical transmembrane segment at 412–432 (MIGGSVHWLSNFIVGLIFPFI) threads the bilayer. 418–419 (HW) provides a ligand contact to D-fructose. Over 433-438 (QVGLGP) the chain is Extracellular. Residues 439-459 (YSFIIFAIICLLTTIYIFMVV) traverse the membrane as a helical segment. The Cytoplasmic segment spans residues 460–502 (PETKGRTFVEINQIFAKKNKVSDVYPEKEEKELNDLPPATREQ).

Belongs to the major facilitator superfamily. Sugar transporter (TC 2.A.1.1) family. Glucose transporter subfamily. Detected in jejunum. Detected in kidney, skeletal muscle, brain and adipose tissue (at protein level). Detected in small intestine and in kidney, and at much lower levels in brain. Detected in enterocytes in duodenum, jejunum, and ileum.

The protein resides in the apical cell membrane. It localises to the cell membrane. The protein localises to the sarcolemma. The enzyme catalyses D-fructose(out) = D-fructose(in). With respect to regulation, fructose uptake is inhibited by mercury ions. Fructose uptake is only slightly inhibited by cytochalasin B. Functions as a fructose transporter that has only low activity with other monosaccharides. Can mediate the uptake of deoxyglucose, but with low efficiency. Essential for fructose uptake in the small intestine. Plays a role in the regulation of salt uptake and blood pressure in response to dietary fructose. Required for the development of high blood pressure in response to high dietary fructose intake. This Rattus norvegicus (Rat) protein is Solute carrier family 2, facilitated glucose transporter member 5.